A 200-amino-acid polypeptide reads, in one-letter code: Small ribosomal subunit protein uS4 (200 aa).

The segment at 21-42 (GTGKELQKRPYPPGQHGPGQRR) is disordered. Residues 92–155 (SRLDNLVYRL…RNLQVIKEAI (64 aa)) enclose the S4 RNA-binding domain.

This sequence belongs to the universal ribosomal protein uS4 family. As to quaternary structure, part of the 30S ribosomal subunit. Contacts protein S5. The interaction surface between S4 and S5 is involved in control of translational fidelity.

One of the primary rRNA binding proteins, it binds directly to 16S rRNA where it nucleates assembly of the body of the 30S subunit. Functionally, with S5 and S12 plays an important role in translational accuracy. The chain is Small ribosomal subunit protein uS4 from Geobacillus thermodenitrificans (strain NG80-2).